A 360-amino-acid chain; its full sequence is Heme A synthase (360 aa).

A run of 8 helical transmembrane segments spans residues 29 to 49 (WLFLMAALVVAMVAVGGATRL), 111 to 131 (FLGRLIGLCFFLPLGWFWWTG), 139 to 159 (LGLVGLGVLGGLQGAVGWIMV), 175 to 195 (LAAHLTLASAIFAGLVWLAAG), 210 to 230 (LTALLLPVATLLQIALGGLVA), 269 to 289 (VALVQLNHRLVAYALLALALL), 309 to 329 (ALAGLVAAQAMLGITTLLLAV), and 330 to 350 (PLWAGLAHQVTAMLVLGMAVA). Heme is bound at residue His-276. His-337 contributes to the heme binding site.

The protein belongs to the COX15/CtaA family. Type 2 subfamily. In terms of assembly, interacts with CtaB. The cofactor is heme b.

Its subcellular location is the cell membrane. It catalyses the reaction Fe(II)-heme o + 2 A + H2O = Fe(II)-heme a + 2 AH2. It functions in the pathway porphyrin-containing compound metabolism; heme A biosynthesis; heme A from heme O: step 1/1. Functionally, catalyzes the conversion of heme O to heme A by two successive hydroxylations of the methyl group at C8. The first hydroxylation forms heme I, the second hydroxylation results in an unstable dihydroxymethyl group, which spontaneously dehydrates, resulting in the formyl group of heme A. This Methylobacterium sp. (strain 4-46) protein is Heme A synthase.